Consider the following 629-residue polypeptide: tRNA uridine 5-carboxymethylaminomethyl modification enzyme MnmG (629 aa).

FAD-binding positions include 13–18, valine 125, and serine 180; that span reads GGGHAG. 273 to 287 provides a ligand contact to NAD(+); sequence GPRYCPSIEDKVMRF. Glutamine 370 is a binding site for FAD.

This sequence belongs to the MnmG family. In terms of assembly, homodimer. Heterotetramer of two MnmE and two MnmG subunits. FAD is required as a cofactor.

Its subcellular location is the cytoplasm. Functionally, NAD-binding protein involved in the addition of a carboxymethylaminomethyl (cmnm) group at the wobble position (U34) of certain tRNAs, forming tRNA-cmnm(5)s(2)U34. This chain is tRNA uridine 5-carboxymethylaminomethyl modification enzyme MnmG, found in Shigella dysenteriae serotype 1 (strain Sd197).